We begin with the raw amino-acid sequence, 92 residues long: Small ribosomal subunit protein bS20 (92 aa).

The tract at residues 1–25 is disordered; sequence MANSAQARKRARQAAKANSHNSALR.

It belongs to the bacterial ribosomal protein bS20 family.

Functionally, binds directly to 16S ribosomal RNA. This is Small ribosomal subunit protein bS20 from Paraburkholderia phymatum (strain DSM 17167 / CIP 108236 / LMG 21445 / STM815) (Burkholderia phymatum).